We begin with the raw amino-acid sequence, 321 residues long: Cytochrome c biogenesis protein CcsA (321 aa).

A run of 8 helical transmembrane segments spans residues 17 to 37 (VVSI…FVGL), 48 to 68 (TFFC…HLPI), 71 to 91 (LYES…VPYF), 98 to 118 (LSTI…WGLL), 143 to 163 (MVSG…LLVI), 225 to 245 (ILSI…VWAN), 259 to 273 (TWAF…IYFH), and 286 to 306 (AIVA…VNLL).

It belongs to the CcmF/CycK/Ccl1/NrfE/CcsA family. In terms of assembly, may interact with Ccs1.

The protein localises to the plastid. Its subcellular location is the chloroplast thylakoid membrane. Its function is as follows. Required during biogenesis of c-type cytochromes (cytochrome c6 and cytochrome f) at the step of heme attachment. The chain is Cytochrome c biogenesis protein CcsA from Populus trichocarpa (Western balsam poplar).